Here is a 518-residue protein sequence, read N- to C-terminus: Kelch repeat and BTB domain-containing protein 4 (518 aa).

The region spanning Ala-45–Ala-112 is the BTB domain. The 93-residue stretch at Cys-147 to His-239 folds into the BACK domain. 5 Kelch repeats span residues His-239 to Gly-285, Asp-286 to Gly-328, Ala-331 to Gly-378, Ile-380 to Asp-430, and Val-432 to Asp-481.

In terms of assembly, component of the BCR(KBTBD4) E3 ubiquitin ligase complex, at least composed of CUL3, KBTBD4 and RBX1.

Its function is as follows. Substrate-specific adapter of a BCR (BTB-CUL3-RBX1) E3 ubiquitin ligase complex which targets CoREST corepressor complex components RCOR1, KDM1A/LSD1 and HDAC2 for proteasomal degradation. RCOR1 is likely to be the primary target while degradation of KDM1A and HDAC2 is likely due to their association with RCOR1. Also targets RCOR3, MIER2 and MIER3 for proteasomal degradation as well as associated proteins ZNF217 and RREB1. Degradation is dependent on the presence of an ELM2 domain in the target proteins. This Pongo abelii (Sumatran orangutan) protein is Kelch repeat and BTB domain-containing protein 4 (KBTBD4).